The following is a 254-amino-acid chain: 5'/3'-nucleotidase SurE (254 aa).

A divalent metal cation is bound by residues Asp-9, Asp-10, Ser-40, and Asn-93.

This sequence belongs to the SurE nucleotidase family. A divalent metal cation serves as cofactor.

The protein localises to the cytoplasm. The enzyme catalyses a ribonucleoside 5'-phosphate + H2O = a ribonucleoside + phosphate. It carries out the reaction a ribonucleoside 3'-phosphate + H2O = a ribonucleoside + phosphate. The catalysed reaction is [phosphate](n) + H2O = [phosphate](n-1) + phosphate + H(+). Nucleotidase with a broad substrate specificity as it can dephosphorylate various ribo- and deoxyribonucleoside 5'-monophosphates and ribonucleoside 3'-monophosphates with highest affinity to 3'-AMP. Also hydrolyzes polyphosphate (exopolyphosphatase activity) with the preference for short-chain-length substrates (P20-25). Might be involved in the regulation of dNTP and NTP pools, and in the turnover of 3'-mononucleotides produced by numerous intracellular RNases (T1, T2, and F) during the degradation of various RNAs. This Yersinia pestis bv. Antiqua (strain Antiqua) protein is 5'/3'-nucleotidase SurE.